The following is a 239-amino-acid chain: Orotidine 5'-phosphate decarboxylase (239 aa).

Substrate contacts are provided by residues aspartate 11, lysine 33, 60 to 69 (DLKLHDIPTT), threonine 123, arginine 185, glutamine 194, glycine 214, and arginine 215. The Proton donor role is filled by lysine 62.

Belongs to the OMP decarboxylase family. Type 1 subfamily. As to quaternary structure, homodimer.

The catalysed reaction is orotidine 5'-phosphate + H(+) = UMP + CO2. Its pathway is pyrimidine metabolism; UMP biosynthesis via de novo pathway; UMP from orotate: step 2/2. In terms of biological role, catalyzes the decarboxylation of orotidine 5'-monophosphate (OMP) to uridine 5'-monophosphate (UMP). This is Orotidine 5'-phosphate decarboxylase (pyrF) from Bacillus subtilis (strain 168).